The primary structure comprises 59 residues: MFTLKKSLLLLLFLGTINLSLSEQERDAKEERRDEMDVEVEKRNILNTIINLAKKILGK.

An N-terminal signal peptide occupies residues 1–22 (MFTLKKSLLLLLFLGTINLSLS). The stretch at 16–44 (TINLSLSEQERDAKEERRDEMDVEVEKRN) forms a coiled coil. Residues 23–41 (EQERDAKEERRDEMDVEVE) constitute a propeptide that is removed on maturation. Leucine 57 is modified (leucine amide).

As to expression, expressed by the skin glands.

The protein resides in the secreted. In terms of biological role, has antimicrobial activity against some Gram-positive bacteria and fungi but has no activity against a range of Gram-negative bacteria except P.faecalis. Active against the Gram-positive bacteria S.aureus ATCC 25923 (MIC=4.8 uM), S.carnosus KHS (MIC=19 uM), B.licheniformis X39 (MIC=19 uM) and R.rhodochrous X15 (MIC=2.4 uM) but is inactive against E.faecium 091299 and E.faecalis 981. Has a less potent antimicrobial activity against the Gram-negative bacterium P.faecalis X29 (MIC=37.5 uM) and is inactive against E.coli, P.aeruginosa and S.typhi. Has antifungal activity against C.albicans ATCC 2002 (MIC=9.5 uM) and is also active against the slime mold 090223 (MIC=9.5 uM). Has extremely low hemolytic activity against human erythrocytes (LC(50)=300 uM). In Odorrana hainanensis (Odor frog), this protein is Temporin-HN2.